We begin with the raw amino-acid sequence, 3021 residues long: MSTLPKPQRKTKRNTIRRPQDVKFPGGGVIYVGVYVLPRRGPRLGVRATRKTSERSQPRGRRKPIPKARRSEGRSWAQPGYPWPLYGNEGCGWAGWLLSPRGSRPNWAPNDPRRRSRNLGKVIDTLTCGFADLMGYIPLVGAPLGGAARALAHGVRALEDGINFATGNLPGCSFSIFLLALFSCLIHPAASLEWRNTSGLYVLTNDCSNSSIVYEADDVILHTPGCIPCVQDGNTSTCWTPVTPTVAVRYVGATTASIRSHVDLLVGAGTMCSALYVGDMCGPVFLVGQAFTFRPRRHRTVQTCNCSLYPGHLSGQRMAWDMMMNWSPAVGMVVAHILRLPQTLFDVVAGAHWGIIAGLAYYSMQGNWAKVAIIMVMFSGVDASTHVTAGQAARNAYGITSLFSVGAKQNLQLINTNGSWHINRTALNCNESINTGFIAGLFYYHKFNSTGCPQRLSSCKPITFFKQGWGPLTDANITGPSDDKPYCWHYAPRPCGIVPALNVCGPVYCFTPSPVVVGTTDAKGAPTYTWGANKTDVFLLESLRPPSGRWFGCTWMNSTGFVKTCGAPPCNIYGDGRDAQNESDLFCPTDCFRKHPEATYSRCGAGPWLTPRCLVDYPYRLWHYPCTVNFTLFKVRMFVGGFEHRFTAACNWTRGERCDIEDRDRSEQHPLLHSTTELAILPCSFTPMPALSTGLIHLHQNIVDVQYLYGIGSGMVGWALKWEFVILIFLLLADARVCVALWLILTISQAEAALENLVTLNAVAAAGTHGIGWYLVAFCAAWYVRGKLVPLVTYSLTGLWSLALLVLLLPQRAYAWSGEDSATLGAGILVLFGFFTLSPWYKHWIARLIWWNQYTICRCESALHVWVPPLLARGGRDGVILLTSLLYPSLIFDITKLLIAALGPLYLIQATITATPYFVRAHVLVRLCMLVRSVMGGKYFQMIILSLADGSNTYLYDHLAPMQHWAAAGLKDLAVATEPVIFSPMEIKVITWGADTAACGDILCGLPVSARLGREVLLGPADDYREMGWRLLAPITAYAQQTRGLLGTIVTSLTGRDKNVVAGEVQVLSTATQTFLGTTVGGVMWTVYHGAGSRTLAGVKHPALQMYTNVDQDLVGWPAPPGAKSLEPCTCGSADLYLVTRDADVIPARRRGDSTASLLSPRPLARLKGSSGGPVMCPSGHVAGIFRAAVCTRGVAKALQFIPVETLSTQARSPSFSDNSTPPAVPQSYQVGYLHAPTGSGKSTKVPAAYVAQGYNVLVLNPSVAATLGFGSFMSRAYGIDPNIRTGNRTVTTGAKLTYSTYGKFLAGGGCSGGAYDVIICDDCHAQDATSILGIGTVLDQAETAGVRLTVLATATPPGSITVPHSNIEEVALGSEGEIPFYGKAIPIACIKGGRHLIFCHSKKKCDKMASKLRGMGLNAVAYYRGLDVSVIPTTGDVVVCATDALMTGFTGDFDSVIDCNVAVEQYVDFSLDPTFSIETCTAPQDAVSRSQRRGRTGRGRLGTYRYVTPGERPSGMFDSVVLCECYDAGCSWYDLQPAETTVRLRAYLSTPGLPVCQDHLDLWESVFTGLTHIDAHFLSQTKQAGLNFSYLTAYQATVCARAQAPPPSWDETWKCLVRLKPTLHGPTPLLYRLGPVQNEICLTHPITKYVMACMSADLEVTTSTWVLLGGVLAAVAAYCLSVGCVVIVGHIELGGKPALVPDKEVLYQQYDEMEECSQARPYIEQAQVIAHQFKEKVLGLLQRATQQQAVIEPIVVSNWQKLEVLWHKHMWNFVSGIQYLAGLSTLPGNPAVASLMAFTASVTSPLTTNQTMFFNILGGWVATHLAGPQASSAFVVSGLAGAAIGGIGLGRVLLDILAGYGAGVSGALVAFKIMGGEPPTTEDMVNLLPAILSPGALVVGVICAAILRRHVGPGEGPVQWMNRLIAFASRGNHVSPAHYVPESDAAARVTALLSSLTVTSLLRRLHQWINEDYPSPCSGDWLRIIWDWVCSVVSDFKTWLSAKIMPALPGLPFISCQKGYKGVWRGDGVMSTRCPCGASIAGHVKNGSMRLAGPRTCANMCHGTFPINEYTTGPSTPCPPPNYTRALWRVAANSYVEVRRVGDFHYITGATEDGLKCPCQVPATEFFTEVDGVRIHRYAPPCRPLLRDEITFMVGLNSYAIGSQLPCEPEPDVSVLTSMLRDPSHITAETAARRLARGSPPSEASSSASQLSAPSLKATCQTHRPHPDAELVDANLLWRQEMGSNITRVESETKVVILDSFEPLRAETDDAELSAAAECFKKPPKYPPALPIWARPDYNPPLLDRWKSPDYVPPTVHGCALPPKGAPPVPPPRRKRTIQLDGSNVSAALAALAEKSFPSSKPQEENSSSSGVDTQSSTASKVLPSPGEESDSESCSSMPPLEGEPGDPDLSCDSWSTVSDSEEQSVVCCSMSYSWTGALITPCSAEEEKLPISPLSNSLLRHHNLVYSTSSRSASQRQKKVTFDRLQVLDDHYKTALQEVKERASRVKARMLSIEEACALVPPHSARSKFGYSAKDVRSLSSKAINQIRSVWEDLLEDTTTPIPTTIMAKNEVFCVDPAKGGRKAARLIVYPDLGVRVCEKRALYDVIQRLSIETMGSAYGFQYSPRQRVERLLKMWTSKKTPLGFSYDTRCFDSTVTGQDIRVEEAVYQCCNLEPEPGQAISSLTERLYCGGPMNNSKGAQCGYLRCRASGVLPTSFGNTITCYIKATAAARAAGLRNPDFLVCGDDLVVVAESDGVDEDRATLRAFTEAMTRYSAPPGDAPQPTYDLELITSCSSNVSVARDDKGKRYYYLTRDATTPLARAAWETARHTPVNSWLGSIIMYAPTIWVRMVMMTHFFSILQSQEILDRPLDFEMYGATYSVTPLDLPAIIERLHGLSAFSVHSYSPVELNRVAGTLRKLGCPPLRAWRHRARAVRAKLIAQGGRAKICGLYLFNWAVRTKTKLTPLPAAGQLDLSSWFTVGVGGNDIYHSVSRARTRYLLLCLLLLTVGVGIFLLPAR.

Ser-2 bears the N-acetylserine; by host mark. An interaction with STAT1 region spans residues 2–23; it reads STLPKPQRKTKRNTIRRPQDVK. The segment at 2–58 is interaction with EIF2AK2/PKR; the sequence is STLPKPQRKTKRNTIRRPQDVKFPGGGVIYVGVYVLPRRGPRLGVRATRKTSERSQP. An interaction with DDX3X region spans residues 2–59; the sequence is STLPKPQRKTKRNTIRRPQDVKFPGGGVIYVGVYVLPRRGPRLGVRATRKTSERSQPR. Positions 2-75 are disordered; it reads STLPKPQRKT…PKARRSEGRS (74 aa). Residues 2–168 are Cytoplasmic-facing; the sequence is STLPKPQRKT…EDGINFATGN (167 aa). 2 consecutive short sequence motifs (nuclear localization signal) follow at residues 5–13 and 38–43; these read PKPQRKTKR and PRRGPR. Positions 7 to 16 are enriched in basic residues; it reads PQRKTKRNTI. Ser-53 bears the Phosphoserine; by host mark. 2 short sequence motifs (nuclear localization signal) span residues 58–64 and 66–71; these read PRGRRKP and PKARRS. Basic residues predominate over residues 58 to 68; it reads PRGRRKPIPKA. Phosphoserine; by host is present on residues Ser-99 and Ser-116. Residues 112-152 form an important for endoplasmic reticulum and mitochondrial localization region; it reads PRRRSRNLGKVIDTLTCGFADLMGYIPLVGAPLGGAARALA. Residues 122–173 form an interaction with APOA2 region; it reads VIDTLTCGFADLMGYIPLVGAPLGGAARALAHGVRALEDGINFATGNLPGCS. Positions 164-167 are important for lipid droplets localization; that stretch reads FATG. Residues 169 to 189 traverse the membrane as a helical segment; it reads LPGCSFSIFLLALFSCLIHPA. A propeptide spans 178 to 191 (ER anchor for the core protein, removed in mature form by host signal peptidase); the sequence is LLALFSCLIHPAAS. Over 190-358 the chain is Lumenal; that stretch reads ASLEWRNTSG…AGAHWGIIAG (169 aa). N-linked (GlcNAc...) asparagine; by host glycans are attached at residues Asn-196, Asn-209, and Asn-234. The important for fusion stretch occupies residues 265–296; sequence LVGAGTMCSALYVGDMCGPVFLVGQAFTFRPR. N-linked (GlcNAc...) asparagine; by host glycosylation is present at Asn-305. A helical transmembrane segment spans residues 359 to 379; the sequence is LAYYSMQGNWAKVAIIMVMFS. The Lumenal segment spans residues 380-731; sequence GVDASTHVTA…WEFVILIFLL (352 aa). Residues 385 to 412 form an HVR1 region; it reads THVTAGQAARNAYGITSLFSVGAKQNLQ. 3 N-linked (GlcNAc...) (high mannose) asparagine; by host glycosylation sites follow: Asn-417, Asn-423, and Asn-430. Intrachain disulfides connect Cys-429-Cys-553, Cys-452-Cys-459, Cys-487-Cys-495, and Cys-504-Cys-509. Asn-448 carries N-linked (GlcNAc...) asparagine; by host glycosylation. The segment at 475 to 479 is HVR2; that stretch reads ANITG. N-linked (GlcNAc...) asparagine; by host glycosylation is present at Asn-476. The segment at 481–494 is CD81-binding 1; the sequence is SDDKPYCWHYAPRP. Residue Asn-533 is glycosylated (N-linked (GlcNAc...) asparagine; by host). The CD81-binding 2 stretch occupies residues 545–552; sequence PPSGRWFG. N-linked (GlcNAc...) asparagine; by host glycosylation is present at Asn-557. 4 disulfide bridges follow: Cys-565–Cys-570, Cys-587–Cys-591, Cys-603–Cys-626, and Cys-613–Cys-650. N-linked (GlcNAc...) (high mannose) asparagine; by host glycans are attached at residues Asn-629 and Asn-651. A disulfide bridge connects residues Cys-658 and Cys-683. Residues 666–677 form a PKR/eIF2-alpha phosphorylation homology domain (PePHD) region; that stretch reads SEQHPLLHSTTE. Residues 732 to 752 form a helical membrane-spanning segment; the sequence is LADARVCVALWLILTISQAEA. Topologically, residues 753 to 763 are lumenal; sequence ALENLVTLNAV. Residues 764–784 form a helical membrane-spanning segment; sequence AAAGTHGIGWYLVAFCAAWYV. Topologically, residues 785-787 are cytoplasmic; that stretch reads RGK. The chain crosses the membrane as a helical span at residues 788–809; that stretch reads LVPLVTYSLTGLWSLALLVLLL. Topologically, residues 810 to 819 are lumenal; the sequence is PQRAYAWSGE. Residues 820 to 840 traverse the membrane as a helical segment; it reads DSATLGAGILVLFGFFTLSPW. Residues 841–844 are Cytoplasmic-facing; the sequence is YKHW. The helical transmembrane segment at 845–864 threads the bilayer; the sequence is IARLIWWNQYTICRCESALH. The Lumenal segment spans residues 865–887; it reads VWVPPLLARGGRDGVILLTSLLY. A helical transmembrane segment spans residues 888–908; that stretch reads PSLIFDITKLLIAALGPLYLI. Residues 905 to 1032 form the Peptidase C18 domain; the sequence is LYLIQATITA…DYREMGWRLL (128 aa). At 909-1663 the chain is on the cytoplasmic side; sequence QATITATPYF…CMSADLEVTT (755 aa). The tract at residues 910-1212 is protease NS2-3; it reads ATITATPYFV…PVETLSTQAR (303 aa). Cys-928 carries S-palmitoyl cysteine; by host lipidation. Positions 935 to 955 are interaction with host SCPS1; sequence MGGKYFQMIILSLADGSNTYL. Active-site for protease NS2 activity; shared with dimeric partner residues include His-958, Glu-978, and Cys-999. A Peptidase S29 domain is found at 1033–1214; sequence APITAYAQQT…ETLSTQARSP (182 aa). Catalysis depends on charge relay system; for serine protease NS3 activity residues His-1089 and Asp-1113. 2 residues coordinate Zn(2+): Cys-1129 and Cys-1131. The active-site Charge relay system; for serine protease NS3 activity is Ser-1171. Residues Cys-1177 and His-1181 each contribute to the Zn(2+) site. Positions 1223–1375 constitute a Helicase ATP-binding domain; the sequence is PAVPQSYQVG…SNIEEVALGS (153 aa). Residue 1236 to 1243 participates in ATP binding; sequence APTGSGKS. Residue Ser-1243 participates in Mg(2+) binding. The short motif at 1322-1325 is the DECH box element; the sequence is DDCH. Residues 1382–1544 enclose the Helicase C-terminal domain; that stretch reads YGKAIPIACI…DLQPAETTVR (163 aa). The tract at residues 1492–1504 is RNA-binding; it reads QRRGRTGRGRLGT. A helical membrane pass occupies residues 1664–1684; sequence STWVLLGGVLAAVAAYCLSVG. The segment at 1685–1696 is NS3-binding; sequence CVVIVGHIELGG. Topologically, residues 1685 to 1811 are cytoplasmic; that stretch reads CVVIVGHIEL…SVTSPLTTNQ (127 aa). Residues 1812–1830 form a helical membrane-spanning segment; sequence TMFFNILGGWVATHLAGPQ. Topologically, residues 1831–1834 are lumenal; it reads ASSA. The chain crosses the membrane as a helical span at residues 1835–1855; the sequence is FVVSGLAGAAIGGIGLGRVLL. A topological domain (cytoplasmic) is located at residue Asp-1856. Residues 1857 to 1877 form a helical membrane-spanning segment; the sequence is ILAGYGAGVSGALVAFKIMGG. Over 1878–1887 the chain is Lumenal; the sequence is EPPTTEDMVN. The chain crosses the membrane as a helical span at residues 1888 to 1908; the sequence is LLPAILSPGALVVGVICAAIL. The Cytoplasmic segment spans residues 1909-1978; it reads RRHVGPGEGP…WINEDYPSPC (70 aa). The S-palmitoyl cysteine; by host moiety is linked to residue Cys-1978. An intramembrane segment occupies 1979-2008; the sequence is SGDWLRIIWDWVCSVVSDFKTWLSAKIMPA. Residues 2009 to 3000 lie on the Cytoplasmic side of the membrane; sequence LPGLPFISCQ…YHSVSRARTR (992 aa). Cys-2017, Cys-2035, Cys-2037, and Cys-2058 together coordinate Zn(2+). The tract at residues 2126-2214 is FKBP8-binding; the sequence is EFFTEVDGVR…ASSSASQLSA (89 aa). Positions 2126–2338 are transcriptional activation; that stretch reads EFFTEVDGVR…PVPPPRRKRT (213 aa). The interval 2141 to 2145 is interaction with non-structural protein 4A; the sequence is PPCRP. Positions 2193 to 2215 are disordered; the sequence is ARRLARGSPPSEASSSASQLSAP. Residues 2195–2448 form an interaction with host SKP2 region; it reads RLARGSPPSE…ALITPCSAEE (254 aa). Ser-2200, Ser-2203, Ser-2207, Ser-2210, Ser-2213, and Ser-2216 each carry phosphoserine; by host. The segment covering 2200-2215 has biased composition (low complexity); that stretch reads SPPSEASSSASQLSAP. The segment at 2216–2255 is ISDR; sequence SLKATCQTHRPHPDAELVDANLLWRQEMGSNITRVESETK. The tract at residues 2216–2281 is interaction with EIF2AK2/PKR; that stretch reads SLKATCQTHR…AELSAAAECF (66 aa). Positions 2255–2312 are NS4B-binding; sequence KVVILDSFEPLRAETDDAELSAAAECFKKPPKYPPALPIWARPDYNPPLLDRWKSPDY. The tract at residues 2305 to 2383 is V3; it reads DRWKSPDYVP…DTQSSTASKV (79 aa). Disordered stretches follow at residues 2318–2338 and 2356–2419; these read HGCALPPKGAPPVPPPRRKRT and KSFP…WSTV. Positions 2328 to 2331 match the SH3-binding motif; sequence PPVP. The short motif at 2333 to 2341 is the Nuclear localization signal element; that stretch reads PRRKRTIQL. Lys-2356 participates in a covalent cross-link: Glycyl lysine isopeptide (Lys-Gly) (interchain with G-Cter in ubiquitin). Residues 2359–2381 show a composition bias toward low complexity; the sequence is PSSKPQEENSSSSGVDTQSSTAS. Phosphoserine; by host is present on residues Ser-2459 and Ser-2472. Residues 2644-2762 enclose the RdRp catalytic domain; the sequence is PLGFSYDTRC…VAESDGVDED (119 aa). Residues Asp-2650, Asp-2748, and Asp-2749 each coordinate Mg(2+). A helical transmembrane segment spans residues 3001 to 3021; it reads YLLLCLLLLTVGVGIFLLPAR.

The protein belongs to the hepacivirus polyprotein family. As to quaternary structure, homooligomer. Interacts with E1 (via C-terminus). Interacts with the non-structural protein 5A. Interacts (via N-terminus) with host STAT1 (via SH2 domain); this interaction results in decreased STAT1 phosphorylation and ubiquitin-mediated proteasome-dependent STAT1 degradation, leading to decreased IFN-stimulated gene transcription. Interacts with host STAT3; this interaction constitutively activates STAT3. Interacts with host LTBR receptor. Interacts with host TNFRSF1A receptor and possibly induces apoptosis. Interacts with host HNRPK. Interacts with host YWHAE. Interacts with host UBE3A/E6AP. Interacts with host DDX3X. Interacts with host APOA2. Interacts with host RXRA protein. Interacts with host SP110 isoform 3/Sp110b; this interaction sequesters the transcriptional corepressor SP110 away from the nucleus. Interacts with host CREB3 nuclear transcription protein; this interaction triggers cell transformation. Interacts with host ACY3. Interacts with host C1QR1. Interacts with host RBM24; this interaction, which enhances the interaction of the mature core protein with 5'-UTR, may inhibit viral translation and favor replication. Interacts with host EIF2AK2/PKR; this interaction induces the autophosphorylation of EIF2AK2. Part of the viral assembly initiation complex composed of NS2, E1, E2, NS3, NS4A, NS5A and the mature core protein. In terms of assembly, forms a heterodimer with envelope glycoprotein E2. Interacts with mature core protein. Interacts with protease NS2. The heterodimer E1/E2 interacts with host CLDN1; this interaction plays a role in viral entry into host cell. Interacts with host SPSB2 (via C-terminus). Part of the viral assembly initiation complex composed of NS2, E1, E2, NS3, NS4A, NS5A and the mature core protein. Interacts with host NEURL3; this interaction prevents E1 binding to glycoprotein E2. Forms a heterodimer with envelope glycoprotein E1. Interacts with host CD81 and SCARB1 receptors; these interactions play a role in viral entry into host cell. Interacts with host EIF2AK2/PKR; this interaction inhibits EIF2AK2 and probably allows the virus to evade the innate immune response. Interacts with host CD209/DC-SIGN and CLEC4M/DC-SIGNR. Interact with host SPCS1; this interaction is essential for viral particle assembly. Interacts with protease NS2. The heterodimer E1/E2 interacts with host CLDN1; this interaction plays a role in viral entry into host cell. Part of the viral assembly initiation complex composed of NS2, E1, E2, NS3, NS4A, NS5A and the mature core protein. Interacts with host SLC3A2/4F2hc; the interaction may facilitate viral entry into host cell. Interacts with human PLSCR1. As to quaternary structure, homohexamer. Homoheptamer. Interacts with protease NS2. In terms of assembly, homodimer. Interacts with host SPCS1; this interaction is essential for viral particle assembly. Interacts with envelope glycoprotein E1. Interacts with envelope glycoprotein E2. Interacts with viroporin p7. Interacts with serine protease/helicase NS3. Part of the replication complex composed of NS2, NS3, NS4A, NS4B, NS5A and the RNA-directed RNA polymerase embedded in an ER-derived membranous web. Part of the viral assembly initiation complex composed of NS2, E1, E2, NS3, NS4A, NS5A and the mature core protein. Interacts with protease NS2. Interacts with non-structural protein 4A; this interaction stabilizes the folding of NS3 serine protease. NS3-NS4A interaction is essential for NS3 activation and allows membrane anchorage of the latter. NS3/NS4A complex also prevents phosphorylation of host IRF3, thus preventing the establishment of dsRNA induced antiviral state. Interacts with host MAVS; this interaction leads to the cleavage and inhibition of host MAVS. Interacts with host TICAM1; this interaction leads to the cleavage and inhibition of host TICAM1. Interacts with host TANK-binding kinase/TBK1; this interaction results in the inhibition of the association between TBK1 and IRF3, which leads to the inhibition of IRF3 activation. Interacts with host RBM24. Part of the replication complex composed of NS2, NS3, NS4A, NS4B, NS5A and the RNA-directed RNA polymerase embedded in an ER-derived membranous web. Part of the viral assembly initiation complex composed of NS2, E1, E2, NS3, NS4A, NS5A and the mature core protein. As to quaternary structure, interacts with NS3 serine protease; this interaction stabilizes the folding of NS3 serine protease. NS3-NS4A interaction is essential for NS3 activation and allows membrane anchorage of the latter. Interacts with non-structural protein 5A (via N-terminus). Part of the replication complex composed of NS2, NS3, NS4A, NS4B, NS5A and the RNA-directed RNA polymerase embedded in an ER-derived membranous web. Part of the viral assembly initiation complex composed of NS2, E1, E2, NS3, NS4A, NS5A and the mature core protein. In terms of assembly, homomultimer. Interacts with non-structural protein NS5A. Interacts with host PLA2G4C; this interaction likely initiates the recruitment of replication complexes to lipid droplets. Interacts with host STING; this interaction disrupts the interaction between STING and TBK1 thereby suppressing the interferon signaling. Part of the replication complex composed of NS2, NS3, NS4A, NS4B, NS5A and the RNA-directed RNA polymerase embedded in an ER-derived membranous web. Monomer. Homodimer; dimerization is required for RNA-binding. Interacts with the mature core protein. Interacts (via N-terminus) with non-structural protein 4A. Interacts with non-structural protein 4B. Interacts (via region D2) with RNA-directed RNA polymerase. Part of the viral assembly initiation complex composed of NS2, E1, E2, NS3, NS4A, NS5A and the mature core protein. Part of the replication complex composed of NS2, NS3, NS4A, NS4B, NS5A and the RNA-directed RNA polymerase embedded in an ER-derived membranous web. Interacts with host GRB2. Interacts with host BIN1. Interacts with host PIK3R1. Interacts with host SRCAP. Interacts with host FKBP8. Interacts (via C-terminus) with host VAPB (via MSP domain). Interacts with host EIF2AK2/PKR; this interaction leads to disruption of EIF2AK2 dimerization by NS5A and probably allows the virus to evade the innate immune response. Interacts (via N-terminus) with host PACSIN2 (via N-terminus); this interaction attenuates protein kinase C alpha-mediated phosphorylation of PACSIN2 by disrupting the interaction between PACSIN2 and PRKCA. Interacts (via N-terminus) with host SRC kinase (via SH2 domain). Interacts with most Src-family kinases. Interacts with host IFI27 and SKP2; promotes the ubiquitin-mediated proteasomal degradation of NS5A. Interacts with host GPS2. Interacts with host TNFRSF21; this interaction allows the modulation by the virus of JNK, p38 MAPK, STAT3, and Akt signaling pathways in a DR6-dependent manner. Interacts (via N-terminus) with host CIDEB (via N-terminus); this interaction seems to regulate the association of HCV particles with APOE. Interacts with host CHKA/Choline Kinase-alpha; CHKA bridges host PI4KA and NS5A and potentiates NS5A-stimulated PI4KA activity, which then facilitates the targeting of the ternary complex to the ER for viral replication. Interacts with host SPSB2 (via C-terminus); this interaction targets NS5A for ubiquitination and degradation. Interacts with host RAB18; this interaction may promote the association of NS5A and other replicase components with lipid droplets. Interacts (via region D2) with host PPIA/CYPA; the interaction stimulates RNA-binding ability of NS5A and is dependent on the peptidyl-prolyl cis-trans isomerase activity of PPIA/CYPA. Interacts with host TRIM14; this interaction induces the degradation of NS5A. As to quaternary structure, homooligomer. Interacts with non-structural protein 5A. Interacts with host VAPB. Interacts with host PRK2/PKN2. Interacts with host HNRNPA1 and SEPT6; these interactions facilitate viral replication. Part of the replication complex composed of NS2, NS3, NS4A, NS4B, NS5A and the RNA-directed RNA polymerase. Zn(2+) serves as cofactor. The cofactor is Mg(2+). In terms of processing, specific enzymatic cleavages in vivo yield mature proteins. The structural proteins, core, E1, E2 and p7 are produced by proteolytic processing by host signal peptidases. The core protein precursor is synthesized as a 23 kDa, which is retained in the ER membrane through the hydrophobic signal peptide. Cleavage by the signal peptidase releases the 21 kDa mature core protein. The cleavage of the core protein precursor occurs between aminoacids 176 and 188 but the exact cleavage site is not known. Some degraded forms of the core protein appear as well during the course of infection. The other proteins (p7, NS2, NS3, NS4A, NS4B, NS5A and NS5B) are cleaved by the viral proteases. Autoprocessing between NS2 and NS3 is mediated by the NS2 cysteine protease catalytic domain and regulated by the NS3 N-terminal domain. Post-translationally, phosphorylated by host PKC and PKA. Ubiquitinated; mediated by UBE3A and leading to core protein subsequent proteasomal degradation. In terms of processing, highly N-glycosylated. Post-translationally, palmitoylation is required for NS2/3 autoprocessing and E2 recruitment to membranes. Palmitoylated. This modification may play a role in its polymerization or in protein-protein interactions. In terms of processing, phosphorylated on serines in a basal form termed p56. p58 is a hyperphosphorylated form of p56. p56 and p58 coexist in the cell in roughly equivalent amounts. Hyperphosphorylation is dependent on the presence of NS4A. Host CSNK1A1/CKI-alpha or RPS6KB1 kinases may be responsible for NS5A phosphorylation. Post-translationally, tyrosine phosphorylation is essential for the interaction with host SRC. Ubiquitinated. Ubiquitination, most probably at Lys-2356, mediated by host IFI27 and SKP2 leads to proteasomal degradation, restricting viral infection. Ubiquitination by host TRIM22 leads to interruption of viral replication. In terms of processing, the N-terminus is phosphorylated by host PRK2/PKN2.

The protein localises to the host endoplasmic reticulum membrane. Its subcellular location is the host mitochondrion membrane. The protein resides in the virion. It is found in the host cytoplasm. It localises to the host nucleus. The protein localises to the host lipid droplet. Its subcellular location is the virion membrane. The protein resides in the host mitochondrion. It is found in the host cell membrane. It localises to the host perinuclear region. The enzyme catalyses Hydrolysis of four peptide bonds in the viral precursor polyprotein, commonly with Asp or Glu in the P6 position, Cys or Thr in P1 and Ser or Ala in P1'.. The catalysed reaction is a ribonucleoside 5'-triphosphate + H2O = a ribonucleoside 5'-diphosphate + phosphate + H(+). It catalyses the reaction ATP + H2O = ADP + phosphate + H(+). It carries out the reaction RNA(n) + a ribonucleoside 5'-triphosphate = RNA(n+1) + diphosphate. Its activity is regulated as follows. Inhibited by the antiviral drug hexamethylene amiloride. Inhibition by amantadine appears to be genotype-dependent. Also inhibited by long-alkyl-chain iminosugar derivatives. With respect to regulation, activity is up-regulated by PRK2/PKN2-mediated phosphorylation. In terms of biological role, packages viral RNA to form a viral nucleocapsid, and promotes virion budding. Participates in the viral particle production as a result of its interaction with the non-structural protein 5A. Binds RNA and may function as a RNA chaperone to induce the RNA structural rearrangements taking place during virus replication. Modulates viral translation initiation by interacting with viral IRES and 40S ribosomal subunit. Affects various cell signaling pathways, host immunity and lipid metabolism. Prevents the establishment of cellular antiviral state by blocking the interferon-alpha/beta (IFN-alpha/beta) and IFN-gamma signaling pathways and by blocking the formation of phosphorylated STAT1 and promoting ubiquitin-mediated proteasome-dependent degradation of STAT1. Activates STAT3 leading to cellular transformation. Regulates the activity of cellular genes, including c-myc and c-fos. May repress the promoter of p53, and sequester CREB3 and SP110 isoform 3/Sp110b in the cytoplasm. Represses cell cycle negative regulating factor CDKN1A, thereby interrupting an important check point of normal cell cycle regulation. Targets transcription factors involved in the regulation of inflammatory responses and in the immune response: suppresses TNF-induced NF-kappa-B activation, and activates AP-1. Binds to dendritic cells (DCs) via C1QR1, resulting in down-regulation of T-lymphocytes proliferation. Alters lipid metabolism by interacting with hepatocellular proteins involved in lipid accumulation and storage. Induces up-regulation of FAS promoter activity, and thereby contributes to the increased triglyceride accumulation in hepatocytes (steatosis). Forms a heterodimer with envelope glycoprotein E2, which mediates virus attachment to the host cell, virion internalization through clathrin-dependent endocytosis and fusion with host membrane. Fusion with the host cell is most likely mediated by both E1 and E2, through conformational rearrangements of the heterodimer required for fusion rather than a classical class II fusion mechanism. E1/E2 heterodimer binds host apolipoproteins such as APOB and ApoE thereby forming a lipo-viro-particle (LVP). APOE associated to the LVP allows the initial virus attachment to cell surface receptors such as the heparan sulfate proteoglycans (HSPGs), syndecan-1 (SDC1), syndecan-1 (SDC2), the low-density lipoprotein receptor (LDLR) and scavenger receptor class B type I (SCARB1). The cholesterol transfer activity of SCARB1 allows E2 exposure and binding of E2 to SCARB1 and the tetraspanin CD81. E1/E2 heterodimer binding on CD81 activates the epithelial growth factor receptor (EGFR) signaling pathway. Diffusion of the complex E1-E2-EGFR-SCARB1-CD81 to the cell lateral membrane allows further interaction with Claudin 1 (CLDN1) and occludin (OCLN) to finally trigger HCV entry. Functionally, forms a heterodimer with envelope glycoprotein E1, which mediates virus attachment to the host cell, virion internalization through clathrin-dependent endocytosis and fusion with host membrane. Fusion with the host cell is most likely mediated by both E1 and E2, through conformational rearrangements of the heterodimer required for fusion rather than a classical class II fusion mechanism. The interaction between envelope glycoprotein E2 and host apolipoprotein E/APOE allows the proper assembly, maturation and infectivity of the viral particles. This interaction is probably promoted via the up-regulation of cellular autophagy by the virus. E1/E2 heterodimer binds host apolipoproteins such as APOB and APOE thereby forming a lipo-viro-particle (LVP). APOE associated to the LVP allows the initial virus attachment to cell surface receptors such as the heparan sulfate proteoglycans (HSPGs), syndecan-1 (SDC1), syndecan-1 (SDC2), the low-density lipoprotein receptor (LDLR) and scavenger receptor class B type I (SCARB1). The cholesterol transfer activity of SCARB1 allows E2 exposure and binding of E2 to SCARB1 and the tetraspanin CD81. E1/E2 heterodimer binding on CD81 activates the epithelial growth factor receptor (EGFR) signaling pathway. Diffusion of the complex E1-E2-EGFR-SCARB1-CD81 to the cell lateral membrane allows further interaction with Claudin 1 (CLDN1) and occludin (OCLN) to finally trigger HCV entry. Inhibits host EIF2AK2/PKR activation, preventing the establishment of an antiviral state. Viral ligand for CD209/DC-SIGN and CLEC4M/DC-SIGNR, which are respectively found on dendritic cells (DCs), and on liver sinusoidal endothelial cells and macrophage-like cells of lymph node sinuses. These interactions allow the capture of circulating HCV particles by these cells and subsequent facilitated transmission to permissive cells such as hepatocytes and lymphocyte subpopulations. The interaction between E2 and host amino acid transporter complex formed by SLC3A2 and SLC7A5/LAT1 may facilitate viral entry into host cell. Its function is as follows. Ion channel protein that acts as a viroporin and plays an essential role in the assembly, envelopment and secretion of viral particles. Regulates the host cell secretory pathway, which induces the intracellular retention of viral glycoproteins and favors assembly of viral particles. Creates a pore in acidic organelles and releases Ca(2+) and H(+) in the cytoplasm of infected cells, leading to a productive viral infection. High levels of cytoplasmic Ca(2+) may trigger membrane trafficking and transport of viral ER-associated proteins to viroplasms, sites of viral genome replication. This ionic imbalance induces the assembly of the inflammasome complex, which triggers the maturation of pro-IL-1beta into IL-1beta through the action of caspase-1. Targets also host mitochondria and induces mitochondrial depolarization. In addition of its role as a viroporin, acts as a lipid raft adhesion factor. In terms of biological role, cysteine protease required for the proteolytic auto-cleavage between the non-structural proteins NS2 and NS3. The N-terminus of NS3 is required for the function of NS2 protease (active region NS2-3). Promotes the initiation of viral particle assembly by mediating the interaction between structural and non-structural proteins. Displays three enzymatic activities: serine protease with a chymotrypsin-like fold, NTPase and RNA helicase. NS3 serine protease, in association with NS4A, is responsible for the cleavages of NS3-NS4A, NS4A-NS4B, NS4B-NS5A and NS5A-NS5B. The NS3/NS4A complex prevents phosphorylation of host IRF3, thus preventing the establishment of dsRNA induced antiviral state. The NS3/NS4A complex induces host amino acid transporter component SLC3A2, thus contributing to HCV propagation. NS3 RNA helicase binds to RNA and unwinds both dsDNA and dsRNA in the 3' to 5' direction, and likely resolves RNA complicated stable secondary structures in the template strand. Binds a single ATP and catalyzes the unzipping of a single base pair of dsRNA. Inhibits host antiviral proteins TBK1 and IRF3 thereby preventing the establishment of an antiviral state. Cleaves host MAVS/CARDIF thereby preventing the establishment of an antiviral state. Cleaves host TICAM1/TRIF, thereby disrupting TLR3 signaling and preventing the establishment of an antiviral state. Functionally, peptide cofactor which forms a non-covalent complex with the N-terminal of NS3 serine protease. The NS3/NS4A complex prevents phosphorylation of host IRF3, thus preventing the establishment of dsRNA induced antiviral state. The NS3/NS4A complex induces host amino acid transporter component SLC3A2, thus contributing to HCV propagation. Its function is as follows. Induces a specific membrane alteration that serves as a scaffold for the virus replication complex. This membrane alteration gives rise to the so-called ER-derived membranous web that contains the replication complex. NS4B self-interaction contributes to its function in membranous web formation. Promotes host TRIF protein degradation in a CASP8-dependent manner thereby inhibiting host TLR3-mediated interferon signaling. Disrupts the interaction between STING and TBK1 contributing to the inhibition of interferon signaling. In terms of biological role, phosphorylated protein that is indispensable for viral replication and assembly. Both hypo- and hyperphosphorylated states are required for the viral life cycle. The hyperphosphorylated form of NS5A is an inhibitor of viral replication. Involved in RNA-binding and especially in binding to the viral genome. Zinc is essential for RNA-binding. Participates in the viral particle production as a result of its interaction with the mature viral core protein. Its interaction with host VAPB may target the viral replication complex to vesicles. Down-regulates viral IRES translation initiation. Mediates interferon resistance, presumably by interacting with and inhibiting host EIF2AK2/PKR. Prevents BIN1-induced apoptosis. Acts as a transcriptional activator of some host genes important for viral replication when localized in the nucleus. Via the interaction with host PACSIN2, modulates lipid droplet formation in order to promote virion assembly. Modulates TNFRSF21/DR6 signaling pathway for viral propagation. RNA-dependent RNA polymerase that performs primer-template recognition and RNA synthesis during viral replication. Initiates RNA transcription/replication at a flavin adenine dinucleotide (FAD), resulting in a 5'- FAD cap on viral RNAs. In this way, recognition of viral 5' RNA by host pattern recognition receptors can be bypassed, thereby evading activation of antiviral pathways. The polypeptide is Genome polyprotein (Homo sapiens (Human)).